Here is a 276-residue protein sequence, read N- to C-terminus: Light-independent protochlorophyllide reductase iron-sulfur ATP-binding protein (276 aa).

Residues 12-17 (GIGKST) and Lys-41 each bind ATP. Ser-16 is a Mg(2+) binding site. [4Fe-4S] cluster is bound by residues Cys-97 and Cys-131. Residue 182 to 183 (NR) participates in ATP binding.

It belongs to the NifH/BchL/ChlL family. As to quaternary structure, homodimer. Protochlorophyllide reductase is composed of three subunits; BchL, BchN and BchB. Requires [4Fe-4S] cluster as cofactor.

It catalyses the reaction chlorophyllide a + oxidized 2[4Fe-4S]-[ferredoxin] + 2 ADP + 2 phosphate = protochlorophyllide a + reduced 2[4Fe-4S]-[ferredoxin] + 2 ATP + 2 H2O. The protein operates within porphyrin-containing compound metabolism; bacteriochlorophyll biosynthesis (light-independent). Functionally, component of the dark-operative protochlorophyllide reductase (DPOR) that uses Mg-ATP and reduced ferredoxin to reduce ring D of protochlorophyllide (Pchlide) to form chlorophyllide a (Chlide). This reaction is light-independent. The L component serves as a unique electron donor to the NB-component of the complex, and binds Mg-ATP. In Chlorobium luteolum (strain DSM 273 / BCRC 81028 / 2530) (Pelodictyon luteolum), this protein is Light-independent protochlorophyllide reductase iron-sulfur ATP-binding protein.